A 243-amino-acid chain; its full sequence is 3-deoxy-manno-octulosonate cytidylyltransferase (243 aa).

The protein belongs to the KdsB family.

It localises to the cytoplasm. The catalysed reaction is 3-deoxy-alpha-D-manno-oct-2-ulosonate + CTP = CMP-3-deoxy-beta-D-manno-octulosonate + diphosphate. It functions in the pathway nucleotide-sugar biosynthesis; CMP-3-deoxy-D-manno-octulosonate biosynthesis; CMP-3-deoxy-D-manno-octulosonate from 3-deoxy-D-manno-octulosonate and CTP: step 1/1. Its pathway is bacterial outer membrane biogenesis; lipopolysaccharide biosynthesis. In terms of biological role, activates KDO (a required 8-carbon sugar) for incorporation into bacterial lipopolysaccharide in Gram-negative bacteria. This chain is 3-deoxy-manno-octulosonate cytidylyltransferase, found in Bartonella bacilliformis (strain ATCC 35685 / KC583 / Herrer 020/F12,63).